A 131-amino-acid polypeptide reads, in one-letter code: Glycine cleavage system H protein (131 aa).

In terms of domain architecture, Lipoyl-binding spans 24–106 (RVTVGISDHA…YGEGWIFVVE (83 aa)). An N6-lipoyllysine modification is found at lysine 65.

Belongs to the GcvH family. The glycine cleavage system is composed of four proteins: P, T, L and H. Requires (R)-lipoate as cofactor.

In terms of biological role, the glycine cleavage system catalyzes the degradation of glycine. The H protein shuttles the methylamine group of glycine from the P protein to the T protein. The chain is Glycine cleavage system H protein from Xanthomonas euvesicatoria pv. vesicatoria (strain 85-10) (Xanthomonas campestris pv. vesicatoria).